The following is a 436-amino-acid chain: UPF0229 protein mll9637 (436 aa).

Residues 54–103 (IPRKGTGEPTFGDDKESGRRQHILPGNRTFSSGDLIPKPGGGGGYGSAAG) are disordered.

It belongs to the UPF0229 family.

This is UPF0229 protein mll9637 from Mesorhizobium japonicum (strain LMG 29417 / CECT 9101 / MAFF 303099) (Mesorhizobium loti (strain MAFF 303099)).